The chain runs to 290 residues: MAAGKEIRGKIKSVENTKKITKAMEMVAASKMRKAQERMLAARPYSEKIRNIAVHLGQANPEYVHPFMQVNGDAKTAGVIVVTTDKGLCGGMNTNVLRAVTAKLRELQDQGVSAEAVAIGNKGLGFLNRVGAKVVSHATGLGDTPHLEKLIGPVKVLLDAYAAGKLSAVYLSYTKFINTMKQESVVEQLLPLSSESMQAEKTSGHSWDYIYEPDAQSVIDELLVRYAESLVYQAVAENMASEQSARMVAMKAATDNAGNVISELKLVYNKTRQAAITTELSEIVAGAAAV.

The protein belongs to the ATPase gamma chain family. In terms of assembly, F-type ATPases have 2 components, CF(1) - the catalytic core - and CF(0) - the membrane proton channel. CF(1) has five subunits: alpha(3), beta(3), gamma(1), delta(1), epsilon(1). CF(0) has three main subunits: a, b and c.

It localises to the cell inner membrane. Produces ATP from ADP in the presence of a proton gradient across the membrane. The gamma chain is believed to be important in regulating ATPase activity and the flow of protons through the CF(0) complex. This is ATP synthase gamma chain from Delftia acidovorans (strain DSM 14801 / SPH-1).